The primary structure comprises 386 residues: Phosphoglycerate kinase (386 aa).

Substrate is bound by residues 21–23 (DLN), Arg-36, 59–62 (HLGR), Arg-112, and Arg-145. ATP is bound by residues Lys-196, Glu-313, and 339-342 (GGDT).

This sequence belongs to the phosphoglycerate kinase family. Monomer.

The protein resides in the cytoplasm. The enzyme catalyses (2R)-3-phosphoglycerate + ATP = (2R)-3-phospho-glyceroyl phosphate + ADP. Its pathway is carbohydrate degradation; glycolysis; pyruvate from D-glyceraldehyde 3-phosphate: step 2/5. The chain is Phosphoglycerate kinase from Haemophilus influenzae (strain PittGG).